Consider the following 147-residue polypeptide: MKVILLKDVKTLGKKGEVINASDGYARNYLIPKGFAEEANKTNLHIWNNKKEAERKQKLAEIEAAQKLAAELKGKEINLTVKSGENGRIFGSITGKDISDELNKKFKINIDKKKIVINNIRQLGTYDVEVKLYPEISTKIKVIIAEK.

Belongs to the bacterial ribosomal protein bL9 family.

Binds to the 23S rRNA. The protein is Large ribosomal subunit protein bL9 of Clostridium kluyveri (strain NBRC 12016).